Reading from the N-terminus, the 654-residue chain is tRNA 5-methylaminomethyl-2-thiouridine biosynthesis bifunctional protein MnmC (654 aa).

Positions 1 to 236 (MPTLLQHAQI…KWEVMSGAYV (236 aa)) are tRNA (mnm(5)s(2)U34)-methyltransferase. Residues 262–654 (IGAGLAGSSS…FGLRRLIRGK (393 aa)) form an FAD-dependent cmnm(5)s(2)U34 oxidoreductase region.

In the N-terminal section; belongs to the methyltransferase superfamily. tRNA (mnm(5)s(2)U34)-methyltransferase family. It in the C-terminal section; belongs to the DAO family. FAD is required as a cofactor.

The protein localises to the cytoplasm. The enzyme catalyses 5-aminomethyl-2-thiouridine(34) in tRNA + S-adenosyl-L-methionine = 5-methylaminomethyl-2-thiouridine(34) in tRNA + S-adenosyl-L-homocysteine + H(+). In terms of biological role, catalyzes the last two steps in the biosynthesis of 5-methylaminomethyl-2-thiouridine (mnm(5)s(2)U) at the wobble position (U34) in tRNA. Catalyzes the FAD-dependent demodification of cmnm(5)s(2)U34 to nm(5)s(2)U34, followed by the transfer of a methyl group from S-adenosyl-L-methionine to nm(5)s(2)U34, to form mnm(5)s(2)U34. The chain is tRNA 5-methylaminomethyl-2-thiouridine biosynthesis bifunctional protein MnmC from Pseudomonas putida (strain ATCC 47054 / DSM 6125 / CFBP 8728 / NCIMB 11950 / KT2440).